Here is a 78-residue protein sequence, read N- to C-terminus: MSNLEERVKKIIVEQLGVDESEVKNEASFVDDLGADSLDTVELVMALEEEFDTEIPDEEAEKITTVQAAIDYVTANAQ.

In terms of domain architecture, Carrier spans 2–77; it reads SNLEERVKKI…AAIDYVTANA (76 aa). S37 carries the O-(pantetheine 4'-phosphoryl)serine modification.

Belongs to the acyl carrier protein (ACP) family. Post-translationally, 4'-phosphopantetheine is transferred from CoA to a specific serine of apo-ACP by AcpS. This modification is essential for activity because fatty acids are bound in thioester linkage to the sulfhydryl of the prosthetic group.

It is found in the cytoplasm. It participates in lipid metabolism; fatty acid biosynthesis. Functionally, carrier of the growing fatty acid chain in fatty acid biosynthesis. The polypeptide is Acyl carrier protein (Vibrio vulnificus (strain CMCP6)).